The primary structure comprises 319 residues: ATP-dependent 6-phosphofructokinase 1 (319 aa).

Glycine 11 serves as a coordination point for ATP. An ADP-binding site is contributed by 21–25 (RAVTR). ATP-binding positions include 72–73 (RC) and 102–105 (GDGS). Residue aspartate 103 coordinates Mg(2+). Substrate is bound at residue 125-127 (TID). Aspartate 127 (proton acceptor) is an active-site residue. Arginine 154 serves as a coordination point for ADP. Residues arginine 162 and 169-171 (MGR) contribute to the substrate site. ADP-binding positions include 185–187 (GAE) and 213–215 (KTH). Residues glutamate 222, arginine 243, and 249-252 (HIQR) each bind substrate.

Belongs to the phosphofructokinase type A (PFKA) family. ATP-dependent PFK group I subfamily. Prokaryotic clade 'B1' sub-subfamily. As to quaternary structure, homotetramer. Mg(2+) serves as cofactor.

The protein localises to the cytoplasm. It carries out the reaction beta-D-fructose 6-phosphate + ATP = beta-D-fructose 1,6-bisphosphate + ADP + H(+). The protein operates within carbohydrate degradation; glycolysis; D-glyceraldehyde 3-phosphate and glycerone phosphate from D-glucose: step 3/4. With respect to regulation, allosterically activated by ADP and other diphosphonucleosides, and allosterically inhibited by phosphoenolpyruvate. Its function is as follows. Catalyzes the phosphorylation of D-fructose 6-phosphate to fructose 1,6-bisphosphate by ATP, the first committing step of glycolysis. The polypeptide is ATP-dependent 6-phosphofructokinase 1 (Clostridium perfringens (strain 13 / Type A)).